Here is a 628-residue protein sequence, read N- to C-terminus: MSFSEFYQRSINEPEAFWAEQARRIDWRQPFTQTLDHSRPPFARWFCGGTTNLCHNAVDRWRDKQPEALALIAVSSETDEERTFTFSQLHDEVNIVAAMLLSLGVQRGDRVLVYMPMIAEAQITLLACARIGAIHSVVFGGFASHSVAARIDDARPALIVSADAGARGGKILPYKKLLDDAIAQAQHQPKHVLLVDRGLAKMAWVDGRDLDFATLRQQHLGASVPVAWLESNETSCILYTSGTTGKPKGVQRDVGGYAVALATSMDTIFGGKAGGVFFCASDIGWVVGHSYIVYAPLLAGMATIVYEGLPTYPDCGVWWKIVEKYQVNRMFSAPTAIRVLKKFPTAQIRNHDLSSLEALYLAGEPLDEPTASWVTETLGVPVIDNYWQTESGWPIMALARALDDRPSRLGSPGVPMYGYNVQLLNEVTGEPCGINEKGMLVIEGPLPPGCIQTIWGDDARFVKTYWSLFNRQVYATFDWGIRDAEGYYFILGRTDDVINIAGHRLGTREIEESISSYPNVAEVAVVGIKDALKGQVAVAFVIPKQSDTLADREAARDEENAIMALVDNQIGHFGRPAHVWFVSQLPKTRSGKMLRRTIQAICEGRDPGDLTTIDDPASLQQIRQAIEE.

Belongs to the ATP-dependent AMP-binding enzyme family.

The enzyme catalyses propanoate + ATP + CoA = propanoyl-CoA + AMP + diphosphate. It participates in organic acid metabolism; propanoate degradation. Its function is as follows. Catalyzes the synthesis of propionyl-CoA from propionate and CoA. Also converts acetate to acetyl-CoA but with a lower specific activity. In Salmonella typhimurium (strain LT2 / SGSC1412 / ATCC 700720), this protein is Propionate--CoA ligase (prpE).